A 536-amino-acid polypeptide reads, in one-letter code: Protoporphyrinogen oxidase, chloroplastic (536 aa).

A chloroplast-targeting transit peptide spans 1-36 (MAAAAAAMATATSATAAPPLRIRDAARRTRRRGHVR). FAD contacts are provided by residues 62–67 (GGGISG), 87–88 (EA), and 111–114 (GPNS). The disordered stretch occupies residues 248 to 272 (TIKTIQERGKNPKPPRDPRLPTPKG). The segment covering 252 to 266 (IQERGKNPKPPRDPR) has biased composition (basic and acidic residues). 510–512 (VAL) contacts FAD.

The protein belongs to the protoporphyrinogen/coproporphyrinogen oxidase family. Protoporphyrinogen oxidase subfamily. The cofactor is FAD.

It is found in the plastid. The protein resides in the chloroplast. The catalysed reaction is protoporphyrinogen IX + 3 O2 = protoporphyrin IX + 3 H2O2. The protein operates within porphyrin-containing compound metabolism; protoporphyrin-IX biosynthesis; protoporphyrin-IX from protoporphyrinogen-IX: step 1/1. It participates in porphyrin-containing compound metabolism; chlorophyll biosynthesis. Functionally, catalyzes the 6-electron oxidation of protoporphyrinogen-IX to form protoporphyrin-IX. The protein is Protoporphyrinogen oxidase, chloroplastic (PPOX1) of Oryza sativa subsp. japonica (Rice).